Reading from the N-terminus, the 380-residue chain is Cytochrome b (380 aa).

4 consecutive transmembrane segments (helical) span residues 34-54, 78-99, 114-134, and 179-199; these read FGSL…LLAA, WLIR…YLHI, WNTG…GYVL, and FFAL…IHLA. Heme b contacts are provided by histidine 84 and histidine 98. Heme b-binding residues include histidine 183 and histidine 197. Histidine 202 lines the a ubiquinone pocket. 4 consecutive transmembrane segments (helical) span residues 227 to 247, 289 to 309, 321 to 341, and 348 to 368; these read LKDI…ALFS, LGGV…PLLH, LSQL…WIGS, and FIII…ILFP.

It belongs to the cytochrome b family. As to quaternary structure, the cytochrome bc1 complex contains 11 subunits: 3 respiratory subunits (MT-CYB, CYC1 and UQCRFS1), 2 core proteins (UQCRC1 and UQCRC2) and 6 low-molecular weight proteins (UQCRH/QCR6, UQCRB/QCR7, UQCRQ/QCR8, UQCR10/QCR9, UQCR11/QCR10 and a cleavage product of UQCRFS1). This cytochrome bc1 complex then forms a dimer. Requires heme b as cofactor.

It is found in the mitochondrion inner membrane. In terms of biological role, component of the ubiquinol-cytochrome c reductase complex (complex III or cytochrome b-c1 complex) that is part of the mitochondrial respiratory chain. The b-c1 complex mediates electron transfer from ubiquinol to cytochrome c. Contributes to the generation of a proton gradient across the mitochondrial membrane that is then used for ATP synthesis. This chain is Cytochrome b (MT-CYB), found in Cyrtonyx montezumae (Montezuma quail).